A 306-amino-acid polypeptide reads, in one-letter code: N-acetylmuramic acid 6-phosphate etherase (306 aa).

The 164-residue stretch at 55-218 (IVPRMKKGGR…STGVMIKLGK (164 aa)) folds into the SIS domain. The active-site Proton donor is E83. The active site involves E114.

Belongs to the GCKR-like family. MurNAc-6-P etherase subfamily. Homodimer.

It carries out the reaction N-acetyl-D-muramate 6-phosphate + H2O = N-acetyl-D-glucosamine 6-phosphate + (R)-lactate. Its pathway is amino-sugar metabolism; N-acetylmuramate degradation. Specifically catalyzes the cleavage of the D-lactyl ether substituent of MurNAc 6-phosphate, producing GlcNAc 6-phosphate and D-lactate. The sequence is that of N-acetylmuramic acid 6-phosphate etherase from Caldanaerobacter subterraneus subsp. tengcongensis (strain DSM 15242 / JCM 11007 / NBRC 100824 / MB4) (Thermoanaerobacter tengcongensis).